The sequence spans 377 residues: MASSEQAEQPSQPSSTPGSENVLPREPLIATAVKFLQNSRVRQSPLATRRAFLKKKGLTDEEIDMAFQQSGTAADEPSSLGPATQVVPVQPPHLISQPYSPAGSRWRDYGALAIIMAGIAFGFHQLYKKYLLPLILGGREDRKQLERMEAGLSELSGSVAQTVTQLQTTLASVQELLIQQQQKIQELAHELAAAKATTSTNWILESQNINELKSEINSLKGLLLNRRQFPPSPSAPKIPSWQIPVKSPSPSSPAAVNHHSSSDISPVSNESTSSSPGKEGHSPEGSTVTYHLLGPQEEGEGVVDVKGQVRMEVQGEEEKREDKEDEEDEEDDDVSHVDEEDCLGVQREDRRGGDGQINEQVEKLRRPEGASNESERD.

The segment covering M1 to S15 has biased composition (low complexity). The interval M1–P24 is disordered. A2 bears the N-acetylalanine mark. The Peroxisomal matrix portion of the chain corresponds to A2 to D108. An N6-acetyllysine modification is found at K34. Residues Y109 to L126 form a helical membrane-spanning segment. Over Y127–D377 the chain is Cytoplasmic. The tract at residues P230–D377 is disordered. S232 is subject to Phosphoserine. 2 stretches are compositionally biased toward low complexity: residues P244–H259 and S265–S275. 2 positions are modified to phosphoserine: S282 and S335. Over residues K323–C342 the composition is skewed to acidic residues. Residues Q360–D377 show a composition bias toward basic and acidic residues.

This sequence belongs to the peroxin-14 family. In terms of assembly, interacts with PEX13; forming the PEX13-PEX14 docking complex. Interacts with PEX5 (via WxxxF/Y motifs). Interacts with PEX19. Interacts with tubulin.

Its subcellular location is the peroxisome membrane. In terms of biological role, component of the PEX13-PEX14 docking complex, a translocon channel that specifically mediates the import of peroxisomal cargo proteins bound to PEX5 receptor. The PEX13-PEX14 docking complex forms a large import pore which can be opened to a diameter of about 9 nm. Mechanistically, PEX5 receptor along with cargo proteins associates with the PEX14 subunit of the PEX13-PEX14 docking complex in the cytosol, leading to the insertion of the receptor into the organelle membrane with the concomitant translocation of the cargo into the peroxisome matrix. Plays a key role for peroxisome movement through a direct interaction with tubulin. The chain is Peroxisomal membrane protein PEX14 from Homo sapiens (Human).